A 108-amino-acid polypeptide reads, in one-letter code: Ig light chain C region (108 aa).

The Ig-like domain occupies 7-102; the sequence is PTVSIYCPSL…LTPALAKSFQ (96 aa). Disulfide bonds link Cys13–Cys106 and Cys28–Cys86.

This Aquarana catesbeiana (American bullfrog) protein is Ig light chain C region.